The chain runs to 165 residues: Coronafacic acid dehydratase (165 aa).

The active site involves histidine 62.

This sequence belongs to the thioester dehydratase family.

It functions in the pathway phytotoxin biosynthesis; coronatine biosynthesis. The polypeptide is Coronafacic acid dehydratase (cfa2) (Pseudomonas savastanoi pv. glycinea (Pseudomonas syringae pv. glycinea)).